The primary structure comprises 473 residues: 3-isopropylmalate dehydratase large subunit (473 aa).

3 residues coordinate [4Fe-4S] cluster: C354, C414, and C417. The tract at residues 425–448 is disordered; that stretch reads LAPGQRSASTSNRNFEGRQGRGGR.

This sequence belongs to the aconitase/IPM isomerase family. LeuC type 1 subfamily. In terms of assembly, heterodimer of LeuC and LeuD. [4Fe-4S] cluster is required as a cofactor.

It catalyses the reaction (2R,3S)-3-isopropylmalate = (2S)-2-isopropylmalate. It participates in amino-acid biosynthesis; L-leucine biosynthesis; L-leucine from 3-methyl-2-oxobutanoate: step 2/4. In terms of biological role, catalyzes the isomerization between 2-isopropylmalate and 3-isopropylmalate, via the formation of 2-isopropylmaleate. The protein is 3-isopropylmalate dehydratase large subunit of Acidothermus cellulolyticus (strain ATCC 43068 / DSM 8971 / 11B).